A 605-amino-acid chain; its full sequence is Glucose oxidase (605 aa).

The first 16 residues, 1–16 (MKTILSSSLVVSMAAA), serve as a signal peptide directing secretion. FAD contacts are provided by Leu-51 and Thr-52. A glycan (N-linked (GlcNAc...) asparagine) is linked at Asn-65. Glu-72 is a binding site for FAD. Asn-111 carries N-linked (GlcNAc...) asparagine glycosylation. Positions 125, 129, 130, and 132 each coordinate FAD. Cysteines 186 and 228 form a disulfide. N-linked (GlcNAc...) asparagine glycosylation is present at Asn-190. Val-272 serves as a coordination point for FAD. 4 N-linked (GlcNAc...) asparagine glycosylation sites follow: Asn-280, Asn-377, Asn-410, and Asn-495. Residue His-538 is the Proton acceptor of the active site. 2 residues coordinate O2: Arg-559 and Val-560. Residues Gly-571 and Met-583 each contribute to the FAD site.

It belongs to the GMC oxidoreductase family. As to quaternary structure, homodimer. FAD is required as a cofactor.

The protein resides in the secreted. It localises to the cell wall. The protein localises to the cytoplasm. Its subcellular location is the extracellular space. It is found in the extracellular matrix. It carries out the reaction beta-D-glucose + O2 = D-glucono-1,5-lactone + H2O2. In terms of biological role, glucose oxidase catalyzes the oxidation of beta-D-glucose to D-glucono-delta-lactone and hydrogen peroxide in the presence of molecular oxygen. Acts as a critical factor modulating pathogenicity by controlling transcription of genes important for fungal secondary metabolism and infection such as those coding for enzymes involved in degradation of the host cell wall. The protein is Glucose oxidase of Aspergillus carbonarius (strain ITEM 5010).